We begin with the raw amino-acid sequence, 212 residues long: Acyl-homoserine-lactone synthase (212 aa).

Belongs to the autoinducer synthase family.

The catalysed reaction is a fatty acyl-[ACP] + S-adenosyl-L-methionine = an N-acyl-L-homoserine lactone + S-methyl-5'-thioadenosine + holo-[ACP] + H(+). Required for the synthesis of OHHL (N-(3-oxohexanoyl)-L-homoserine lactone), an autoinducer molecule which binds to TraR and thus acts in the control of conjugal transfer. In Rhizobium radiobacter (Agrobacterium tumefaciens), this protein is Acyl-homoserine-lactone synthase (traI).